The sequence spans 392 residues: ATP phosphoribosyltransferase regulatory subunit (392 aa).

This sequence belongs to the class-II aminoacyl-tRNA synthetase family. HisZ subfamily. Heteromultimer composed of HisG and HisZ subunits.

The protein resides in the cytoplasm. It functions in the pathway amino-acid biosynthesis; L-histidine biosynthesis; L-histidine from 5-phospho-alpha-D-ribose 1-diphosphate: step 1/9. Its function is as follows. Required for the first step of histidine biosynthesis. May allow the feedback regulation of ATP phosphoribosyltransferase activity by histidine. This Prochlorococcus marinus (strain MIT 9211) protein is ATP phosphoribosyltransferase regulatory subunit.